Consider the following 425-residue polypeptide: Cell adhesion molecule CEACAM16 (425 aa).

The N-terminal stretch at 1 to 20 (MALTGYSWLLLSATFLNVGA) is a signal peptide. An N-linked (GlcNAc...) asparagine glycan is attached at Asn36. Ig-like C2-type domains follow at residues 133 to 218 (PTVL…INLT) and 223 to 309 (PERV…ASVV). A disulfide bridge links Cys153 with Cys201. N-linked (GlcNAc...) asparagine glycosylation is present at Asn216. A disulfide bridge links Cys252 with Cys293. Residue Asn394 is glycosylated (N-linked (GlcNAc...) asparagine).

This sequence belongs to the immunoglobulin superfamily. CEA family. In terms of assembly, homooligomer; can for homodimers and homotetramers. Interacts with TECTA and TECTB.

The protein localises to the secreted. Its function is as follows. Required for proper hearing, plays a role in maintaining the integrity of the tectorial membrane. The sequence is that of Cell adhesion molecule CEACAM16 from Homo sapiens (Human).